The following is a 328-amino-acid chain: Arylacetonitrilase (328 aa).

One can recognise a CN hydrolase domain in the interval 5 to 278 (VRVAVTQAEP…EGIIYADLDF (274 aa)). Residue Glu45 is the Proton acceptor of the active site. Residue Lys125 is part of the active site. Residue Cys160 is the Nucleophile of the active site.

The protein belongs to the carbon-nitrogen hydrolase superfamily. Nitrilase family.

It catalyses the reaction a nitrile + 2 H2O = a carboxylate + NH4(+). The enzyme catalyses 4-chlorophenylacetonitrile + 2 H2O = 4-chlorophenylacetate + NH4(+). Functionally, nitrilase that hydrolyzes preferentially phenylacetonitrile, (R,S)-mandelonitrile, and 3-indolylacetonitrile. The polypeptide is Arylacetonitrilase (Aspergillus niger (strain ATCC MYA-4892 / CBS 513.88 / FGSC A1513)).